The primary structure comprises 433 residues: Cyclin-dependent kinase 15 (433 aa).

Residues 46 to 83 (ASSSTASFHPRGLEAASAQKLKSKRPRSNSDSFQEENL) form a disordered region. The 285-residue stretch at 52–336 (SFHPRGLEAA…SKLPNYNPEW (285 aa)) folds into the Protein kinase domain. ATP contacts are provided by residues 58-66 (LEAASAQKL) and Glu-81. The active-site Proton acceptor is Thr-173.

Belongs to the protein kinase superfamily. CMGC Ser/Thr protein kinase family. CDC2/CDKX subfamily. Requires Mg(2+) as cofactor.

The catalysed reaction is L-seryl-[protein] + ATP = O-phospho-L-seryl-[protein] + ADP + H(+). It carries out the reaction L-threonyl-[protein] + ATP = O-phospho-L-threonyl-[protein] + ADP + H(+). In terms of biological role, serine/threonine-protein kinase that acts like an antiapoptotic protein that counters TRAIL/TNFSF10-induced apoptosis by inducing phosphorylation of BIRC5 at 'Thr-34'. The polypeptide is Cyclin-dependent kinase 15 (Cdk15) (Mus musculus (Mouse)).